We begin with the raw amino-acid sequence, 69 residues long: Photosystem I reaction center subunit IV (69 aa).

Belongs to the PsaE family.

It localises to the cellular thylakoid membrane. Stabilizes the interaction between PsaC and the PSI core, assists the docking of the ferredoxin to PSI and interacts with ferredoxin-NADP oxidoreductase. This Prochlorococcus marinus (strain MIT 9515) protein is Photosystem I reaction center subunit IV.